The primary structure comprises 424 residues: 3-phosphoshikimate 1-carboxyvinyltransferase (424 aa).

Residues lysine 20, serine 21, and arginine 25 each coordinate 3-phosphoshikimate. Lysine 20 contributes to the phosphoenolpyruvate binding site. 2 residues coordinate phosphoenolpyruvate: glycine 92 and arginine 120. The 3-phosphoshikimate site is built by serine 165, glutamine 167, aspartate 313, and lysine 340. Glutamine 167 contacts phosphoenolpyruvate. Aspartate 313 (proton acceptor) is an active-site residue. Positions 344 and 386 each coordinate phosphoenolpyruvate.

It belongs to the EPSP synthase family. As to quaternary structure, monomer.

The protein localises to the cytoplasm. The catalysed reaction is 3-phosphoshikimate + phosphoenolpyruvate = 5-O-(1-carboxyvinyl)-3-phosphoshikimate + phosphate. Its pathway is metabolic intermediate biosynthesis; chorismate biosynthesis; chorismate from D-erythrose 4-phosphate and phosphoenolpyruvate: step 6/7. Its function is as follows. Catalyzes the transfer of the enolpyruvyl moiety of phosphoenolpyruvate (PEP) to the 5-hydroxyl of shikimate-3-phosphate (S3P) to produce enolpyruvyl shikimate-3-phosphate and inorganic phosphate. The sequence is that of 3-phosphoshikimate 1-carboxyvinyltransferase from Bacillus cytotoxicus (strain DSM 22905 / CIP 110041 / 391-98 / NVH 391-98).